The chain runs to 419 residues: Protein phosphatase methylesterase 1 (419 aa).

Positions 1 to 12 (MSQLHRGMHKKP) are enriched in basic residues. Residues 1-75 (MSQLHRGMHK…KSAASPTVPA (75 aa)) are disordered. Over residues 32-52 (TETEETVECTEEEEEQDETDG) the composition is skewed to acidic residues. Active-site residues include serine 230, aspartate 256, and histidine 383.

The protein belongs to the AB hydrolase superfamily.

It catalyses the reaction [phosphatase 2A protein]-C-terminal L-leucine methyl ester + H2O = [phosphatase 2A protein]-C-terminal L-leucine + methanol + H(+). Its function is as follows. Demethylates proteins that have been reversibly carboxymethylated. Demethylates the phosphatase PP2A catalytic subunit. This Yarrowia lipolytica (strain CLIB 122 / E 150) (Yeast) protein is Protein phosphatase methylesterase 1 (PPE1).